Consider the following 1014-residue polypeptide: Chondroitin sulfate ABC exolyase (1014 aa).

The first 14 residues, 1–14 (MLILSFLCPAFLNA), serve as a signal peptide directing secretion. 5 residues coordinate Ca(2+): Ser-24, Glu-26, Asp-50, His-53, and Asp-161. Residues His-345 and His-454 each act as proton acceptor in the active site. The active-site Proton donor is the Tyr-461.

The protein belongs to the polysaccharide lyase 8 family. As to quaternary structure, monomer. Ca(2+) is required as a cofactor. Mg(2+) serves as cofactor.

It is found in the periplasm. It carries out the reaction Exolytic removal of Delta(4)-unsaturated disaccharide residues from the non-reducing ends of both polymeric chondroitin/dermatan sulfates and their oligosaccharide fragments.. With respect to regulation, specific activity for chondroitin sulfate substrates increases moderately (2-fold) while an increase of 25-fold is observed for dermatan sulfate as substrate upon addition of Ca(2+) or Mg(2+) ions. Increasing the concentration of Na(+), K(+) or Cs(+) chloride from 0 to 0.1 M, increases the activity against all substrates. Further increases in salt concentration reduces the activity dramatically, with 50% inhibition occurring at 0.15 M and nearly complete inhibition at 0.4 M salt. The addition of 10 mM Ca(2+) or Mg(2+) ions increases the activity against chondroitin 4- and 6-sulfates by 2-3-fold, while the activity against dermatan sulfate increases much more significantly by 50-fold. Addition of Mn(2+) and Zn(2+) reduces activity against chondroitin sulfate substrates, but increases the activity against dermatan sulfate. Increasing the concentration of CaCl(2) with both chondroitin 4- and 6-sulfates from 0 to 0.04 M increases the activity. A further increase reduces activity, with 50% inhibition at 0.065-0.085 M and a complete inhibition of the reaction at 0.2 M. In case of dermatan sulfate, the addition of low concentration of CaCl(2) dramatically increases the activity from the basal level. The maximal activity is reached at 0.01 M CaCl(2). Its function is as follows. Broad-specificity glycosaminoglycan lyase, which acts in an exolytic fashion degrading chondroitin sulfates and dermatan sulfate to yield only disaccharide products. Has a preference for chondroitin 4-sulfate over chondroitin 6-sulfate. Has extremely low activity against hyaluronic acid. Is not active against acharan sulfate, heparin or heparan sulfate. This is Chondroitin sulfate ABC exolyase (chonabc) from Bacteroides thetaiotaomicron.